A 462-amino-acid chain; its full sequence is NEDD8-activating enzyme E1 regulatory subunit (462 aa).

Belongs to the ubiquitin-activating E1 family. ULA1 subfamily. Heterodimer of UBA3 and ULA1. The complex binds NEDD8 and UBC12.

It functions in the pathway protein modification; protein neddylation. Its function is as follows. Regulatory subunit of the dimeric UBA3-ULA1 E1 enzyme. E1 activates NEDD8/RUB1 by first adenylating its C-terminal glycine residue with ATP, thereafter linking this residue to the side chain of the catalytic cysteine, yielding a NEDD8-UBA3 thioester and free AMP. E1 finally transfers NEDD8 to the catalytic cysteine of UBC12. This chain is NEDD8-activating enzyme E1 regulatory subunit (ULA1), found in Saccharomyces cerevisiae (strain ATCC 204508 / S288c) (Baker's yeast).